Reading from the N-terminus, the 181-residue chain is Adenylate kinase (181 aa).

10-15 (GAGKGT) serves as a coordination point for ATP. An NMP region spans residues 30–59 (STGDLFRYNISNGTELGLEAKKYLDAGDLV). Residues Thr31, Arg36, 57–59 (DLV), 85–88 (GYPR), and Gln92 contribute to the AMP site. Positions 126–132 (GRGRDDD) are LID. Arg127 provides a ligand contact to ATP. AMP is bound by residues Arg129 and Arg140. Gly166 contacts ATP.

Belongs to the adenylate kinase family. In terms of assembly, monomer.

The protein localises to the cytoplasm. It catalyses the reaction AMP + ATP = 2 ADP. The protein operates within purine metabolism; AMP biosynthesis via salvage pathway; AMP from ADP: step 1/1. Catalyzes the reversible transfer of the terminal phosphate group between ATP and AMP. Plays an important role in cellular energy homeostasis and in adenine nucleotide metabolism. This Mycolicibacterium vanbaalenii (strain DSM 7251 / JCM 13017 / BCRC 16820 / KCTC 9966 / NRRL B-24157 / PYR-1) (Mycobacterium vanbaalenii) protein is Adenylate kinase.